A 218-amino-acid chain; its full sequence is Non-structural protein NS3 (218 aa).

Belongs to the orbivirus NS3 family.

May play a role in the release of virions from infected cells. This Camelus dromedarius (Dromedary) protein is Non-structural protein NS3 (Segment-10).